The primary structure comprises 327 residues: Pectate lyase A (327 aa).

The first 19 residues, 1 to 19 (MQNLKFLIAAVSCLGPALA), serve as a signal peptide directing secretion. N-linked (GlcNAc...) asparagine glycosylation occurs at N99. Ca(2+) contacts are provided by D140, D169, and D173. R226 is a catalytic residue.

Belongs to the polysaccharide lyase 1 family. Requires Ca(2+) as cofactor.

It localises to the secreted. The enzyme catalyses Eliminative cleavage of (1-&gt;4)-alpha-D-galacturonan to give oligosaccharides with 4-deoxy-alpha-D-galact-4-enuronosyl groups at their non-reducing ends.. In terms of biological role, pectinolytic enzyme consist of four classes of enzymes: pectin lyase, polygalacturonase, pectin methylesterase and rhamnogalacturonase. Among pectinolytic enzymes, pectin lyase is the most important in depolymerization of pectin, since it cleaves internal glycosidic bonds of highly methylated pectins. Favors pectate, the anion, over pectin, the methyl ester. In Emericella nidulans (strain FGSC A4 / ATCC 38163 / CBS 112.46 / NRRL 194 / M139) (Aspergillus nidulans), this protein is Pectate lyase A (plyA).